The chain runs to 601 residues: Proline--tRNA ligase (601 aa).

It belongs to the class-II aminoacyl-tRNA synthetase family. ProS type 1 subfamily. As to quaternary structure, homodimer.

The protein localises to the cytoplasm. It carries out the reaction tRNA(Pro) + L-proline + ATP = L-prolyl-tRNA(Pro) + AMP + diphosphate. Its function is as follows. Catalyzes the attachment of proline to tRNA(Pro) in a two-step reaction: proline is first activated by ATP to form Pro-AMP and then transferred to the acceptor end of tRNA(Pro). As ProRS can inadvertently accommodate and process non-cognate amino acids such as alanine and cysteine, to avoid such errors it has two additional distinct editing activities against alanine. One activity is designated as 'pretransfer' editing and involves the tRNA(Pro)-independent hydrolysis of activated Ala-AMP. The other activity is designated 'posttransfer' editing and involves deacylation of mischarged Ala-tRNA(Pro). The misacylated Cys-tRNA(Pro) is not edited by ProRS. This is Proline--tRNA ligase from Trichodesmium erythraeum (strain IMS101).